Consider the following 263-residue polypeptide: Cysteine-rich repeat secretory protein 55 (263 aa).

The N-terminal stretch at 1–20 (MKTLVVKCFLLLALVCSCRA) is a signal peptide. Gnk2-homologous domains are found at residues 22–126 (DSIW…QENF) and 132–240 (TGAG…FYPF).

Belongs to the cysteine-rich repeat secretory protein family.

It localises to the secreted. The chain is Cysteine-rich repeat secretory protein 55 (CRRSP55) from Arabidopsis thaliana (Mouse-ear cress).